The following is a 440-amino-acid chain: (S)-N-methylcoclaurine 3'-hydroxylase-like protein (440 aa).

The helical; Signal-anchor for type II membrane protein transmembrane segment at Glu2–Val21 threads the bilayer. Residue Cys430 coordinates heme.

It belongs to the cytochrome P450 family. Heme serves as cofactor.

It localises to the membrane. Involved in the biosynthesis of benzylisoquinoline alkaloids. Probably involved in papaverine biosynthesis since its transcripts are abundant only in cultivars with substantial papaverine accumulation. May catalyze the 3'-hydroxylation of (S)-coclaurine. The protein is (S)-N-methylcoclaurine 3'-hydroxylase-like protein of Papaver somniferum (Opium poppy).